Consider the following 62-residue polypeptide: Metallothionein-4 (62 aa).

A divalent metal cation contacts are provided by Cys-6, Cys-8, Cys-14, Cys-16, Cys-20, Cys-22, Cys-25, Cys-27, Cys-30, Cys-34, Cys-35, Cys-37, Cys-38, Cys-42, Cys-45, Cys-49, Cys-51, Cys-58, Cys-60, and Cys-61.

This sequence belongs to the metallothionein superfamily. Type 1 family. Expressed exclusively in stratified squamous epithelia associated with oral epithelia, esophagus, upper stomach, tail, footpads and neonatal skin.

Seems to bind zinc and copper. Could play a special role in regulating zinc metabolism during the differentiation of stratified epithelia. This Mus musculus (Mouse) protein is Metallothionein-4 (Mt4).